The primary structure comprises 553 residues: Solute carrier family 22 member 4 (553 aa).

Topologically, residues 1–20 (MRDYDEVIAFLGEWGPFQRL) are cytoplasmic. Residues 21 to 41 (IFFLLSASIIPNGFNGMSVVF) form a helical membrane-spanning segment. Over 42 to 142 (LAGTPEHRCL…NLVCEDDWKT (101 aa)) the chain is Extracellular. N57, N64, and N91 each carry an N-linked (GlcNAc...) asparagine glycan. Residues 143–163 (PLTTSLFFVGVLCGSFVSGQL) traverse the membrane as a helical segment. Over 164 to 171 (SDRFGRKK) the chain is Cytoplasmic. Residues 172-192 (VLFATMAVQTGFSFVQIFSTN) traverse the membrane as a helical segment. Residues 193–197 (WEMFT) lie on the Extracellular side of the membrane. The chain crosses the membrane as a helical span at residues 198-218 (VLFAIVGMGQISNYVVAFILG). Position 218-225 (218-225 (GTEILSKS)) interacts with ATP. Residues 219-232 (TEILSKSVRIIFST) are Cytoplasmic-facing. A helical transmembrane segment spans residues 233 to 253 (LGVCTFFAIGYMVLPLFAYFI). Topologically, residues 254–257 (RDWR) are extracellular. Residues 258–278 (MLLLALTLPGLFCVPLWWFIP) form a helical membrane-spanning segment. Residues 279 to 339 (ESPRWLISQR…IILDLFRTRN (61 aa)) are Cytoplasmic-facing. A helical transmembrane segment spans residues 340–360 (IATITVMAVMLWMLTSVGYFA). Residues 361 to 373 (LSLNVPNLHGDVY) lie on the Extracellular side of the membrane. Residues 374–394 (LNCFLSGLIEVPAYFTAWLLL) traverse the membrane as a helical segment. The Cytoplasmic portion of the chain corresponds to 395–400 (RTLPRR). The helical transmembrane segment at 401–421 (YIIAGVLFWGGGVLLLIQVVP) threads the bilayer. The Extracellular segment spans residues 422–428 (EDYNFVS). Residues 429-449 (IGLVMLGKFGITSAFSMLYVF) form a helical membrane-spanning segment. Residues 450-462 (TAELYPTLVRNMA) lie on the Cytoplasmic side of the membrane. The chain crosses the membrane as a helical span at residues 463–483 (VGITSMASRVGSIIAPYFVYL). The Extracellular portion of the chain corresponds to 484–488 (GAYNR). The chain crosses the membrane as a helical span at residues 489 to 509 (LLPYILMGSLTVLIGIITLFF). Residues 510–553 (PESFGVTLPENLEQMQKVRGFRCGKKSTVSVDREESPKVLITAF) lie on the Cytoplasmic side of the membrane.

The protein belongs to the major facilitator (TC 2.A.1) superfamily. Organic cation transporter (TC 2.A.1.19) family. Interacts with PDZK1. As to expression, expressed in kidney. Expressed in small intestines. Expressed in liver in non-parenchymal liver tissue such as sinusoidal vessels. Weakly expressed in lung and brain. Expressed in testis and spleen. Expressed in heart.

Its subcellular location is the apical cell membrane. It is found in the mitochondrion membrane. It localises to the basal cell membrane. The enzyme catalyses ergothioneine(out) + Na(+)(out) = ergothioneine(in) + Na(+)(in). It carries out the reaction acetylcholine(in) = acetylcholine(out). The catalysed reaction is (R)-carnitine(out) + Na(+)(out) = (R)-carnitine(in) + Na(+)(in). It catalyses the reaction glycine betaine(out) + Na(+)(out) = glycine betaine(in) + Na(+)(in). Allosterically activated by intracellular ATP. Functionally, transporter that mediates the transport of endogenous and microbial zwitterions and organic cations. Functions as a Na(+)-dependent and pH-dependent high affinity microbial symporter of potent food-derived antioxidant ergothioeine. Transports one sodium ion with one ergothioeine molecule. Involved in the absorption of ergothioneine from the luminal/apical side of the small intestine and renal tubular cells, and into non-parenchymal liver cells, thereby contributing to maintain steady-state ergothioneine level in the body. Also mediates the bidirectional transport of acetycholine, although the exact transport mechanism has not been fully identified yet. Most likely exports anti-inflammatory acetylcholine in non-neuronal tissues, thereby contributing to the non-neuronal cholinergic system. Displays a general physiological role linked to better survival by controlling inflammation and oxidative stress, which may be related to ergothioneine and acetycholine transports. May also function as a low-affinity Na(+)-dependent transporter of L-carnitine through the mitochondrial membrane, thereby maintaining intracellular carnitine homeostasis. May contribute to regulate the transport of cationic compounds in testis across the blood-testis-barrier. This chain is Solute carrier family 22 member 4, found in Mus musculus (Mouse).